Here is a 23-residue protein sequence, read N- to C-terminus: Acidic phospholipase CHA-E6a (23 aa).

Belongs to the phospholipase A2 family. Group II subfamily. D49 sub-subfamily. The cofactor is Ca(2+). Contains 7 disulfide bonds. Expressed by the venom gland.

It localises to the secreted. It carries out the reaction a 1,2-diacyl-sn-glycero-3-phosphocholine + H2O = a 1-acyl-sn-glycero-3-phosphocholine + a fatty acid + H(+). Its function is as follows. Snake venom phospholipase A2 (PLA2) that shows high lipolytic (1048 umol/mg/min) and weak ADP-induced platelet aggregation activities. Also shows weak anticoagulant activity (IC(50) is less than 1.0 uM). PLA2 catalyzes the calcium-dependent hydrolysis of the 2-acyl groups in 3-sn-phosphoglycerides. The polypeptide is Acidic phospholipase CHA-E6a (Crotalus horridus (Timber rattlesnake)).